We begin with the raw amino-acid sequence, 167 residues long: Sulfopyruvate decarboxylase subunit alpha (167 aa).

It belongs to the ComD family. In terms of assembly, heterododecamer composed of 6 subunits alpha and 6 subunits beta.

The catalysed reaction is 3-sulfopyruvate + H(+) = sulfoacetaldehyde + CO2. Its pathway is cofactor biosynthesis; coenzyme M biosynthesis; sulfoacetaldehyde from phosphoenolpyruvate and sulfite: step 4/4. Functionally, involved in the biosynthesis of the coenzyme M (2-mercaptoethanesulfonic acid). Catalyzes the decarboxylation of sulfopyruvate to sulfoacetaldehyde. In Methanococcus maripaludis (strain DSM 14266 / JCM 13030 / NBRC 101832 / S2 / LL), this protein is Sulfopyruvate decarboxylase subunit alpha (comD).